Consider the following 414-residue polypeptide: Multifunctional CCA protein (414 aa).

Residues G8 and R11 each contribute to the ATP site. Residues G8 and R11 each coordinate CTP. Residues D21 and D23 each coordinate Mg(2+). 3 residues coordinate ATP: R91, R137, and R140. R91, R137, and R140 together coordinate CTP. The HD domain maps to 226–327 (TGVHVMMVVD…VTLFERCDAF (102 aa)).

Belongs to the tRNA nucleotidyltransferase/poly(A) polymerase family. Bacterial CCA-adding enzyme type 1 subfamily. As to quaternary structure, monomer. Can also form homodimers and oligomers. Requires Mg(2+) as cofactor. Ni(2+) is required as a cofactor.

It carries out the reaction a tRNA precursor + 2 CTP + ATP = a tRNA with a 3' CCA end + 3 diphosphate. The enzyme catalyses a tRNA with a 3' CCA end + 2 CTP + ATP = a tRNA with a 3' CCACCA end + 3 diphosphate. Its function is as follows. Catalyzes the addition and repair of the essential 3'-terminal CCA sequence in tRNAs without using a nucleic acid template. Adds these three nucleotides in the order of C, C, and A to the tRNA nucleotide-73, using CTP and ATP as substrates and producing inorganic pyrophosphate. tRNA 3'-terminal CCA addition is required both for tRNA processing and repair. Also involved in tRNA surveillance by mediating tandem CCA addition to generate a CCACCA at the 3' terminus of unstable tRNAs. While stable tRNAs receive only 3'-terminal CCA, unstable tRNAs are marked with CCACCA and rapidly degraded. This Herminiimonas arsenicoxydans protein is Multifunctional CCA protein.